Here is a 303-residue protein sequence, read N- to C-terminus: Cytosolic-abundant heat soluble protein 3 (303 aa).

Residues 1 to 19 are compositionally biased toward low complexity; the sequence is MSSRQNQQSSSQHSSSSQQ. The segment at 1–67 is disordered; the sequence is MSSRQNQQSS…PGSHSEVHEE (67 aa). Residues 170–257 adopt a coiled-coil conformation; sequence ARQDEQDAGM…ESAKAQTNVN (88 aa). 2 CAHS motif regions span residues 184–202 and 221–239; these read YREEVERDAELIRQILERQ and QEREIQLEAEYAMRALELE. The span at 270–280 shows a compositional bias: polar residues; the sequence is KGAIQTSADKS. Residues 270-303 are disordered; the sequence is KGAIQTSADKSSTTKTGPTTVTQIKHTEQHTERR. Over residues 282-291 the composition is skewed to low complexity; sequence TTKTGPTTVT. Positions 294 to 303 are enriched in basic and acidic residues; it reads KHTEQHTERR.

Belongs to the Cytosolic-abundant heat soluble protein (CAHS) family.

The protein resides in the cytoplasm. In terms of biological role, CAHS proteins are cytosolic heat soluble proteins that seem to contribute to the anhydrobiosis in tardigrades, but their specific mechanisms are yet to be identified. It is possible that protection during anhydrobiosis might occur via the stabilization of vitrifying small molecules such as sugars, but not via the direct glass transition of CAHS proteins themselves. In Ramazzottius varieornatus (Water bear), this protein is Cytosolic-abundant heat soluble protein 3.